We begin with the raw amino-acid sequence, 557 residues long: Nucleolin 1 (557 aa).

3 disordered regions span residues 1 to 297, 376 to 398, and 474 to 557; these read MGKS…GGSK, GERG…GDGG, and LVVD…FGDE. Residues 49–63 show a composition bias toward basic and acidic residues; sequence QKEKAVKKVPKKVES. Composition is skewed to acidic residues over residues 64–74, 91–101, and 124–135; these read SDDSDSESEEE, ESSDDSSSDDE, and SSSDDDSSDEEV. The span at 174-184 shows a compositional bias: low complexity; the sequence is AKIAKPAAKDS. Residues 186–197 are compositionally biased toward acidic residues; the sequence is SSDDDSDEDSED. The span at 203–217 shows a compositional bias: low complexity; that stretch reads KKAAPAAAKAASSSD. Residues 218–229 show a composition bias toward acidic residues; the sequence is SSDEDSDEESED. The span at 230-247 shows a compositional bias: basic and acidic residues; sequence EKPAQKKADTKASKKSSS. The segment covering 249 to 263 has biased composition (acidic residues); that stretch reads ESSESEEDESEDEEE. The span at 264–281 shows a compositional bias: basic and acidic residues; it reads TPKKKSSDVEMVDAEKSS. The region spanning 297–374 is the RRM 1 domain; that stretch reads KTLFAANLSF…REIRLDIAQE (78 aa). The region spanning 401–481 is the RRM 2 domain; it reads KKIFVKGFDA…FYLVVDEPRP (81 aa). Gly residues predominate over residues 485 to 503; the sequence is SSGGGGFGRGNGRFGSGGG.

Interacts with THAL in the nucleus. As to expression, expressed in roots, leaves, shoots and flowers.

The protein localises to the nucleus. It is found in the nucleolus. Functionally, involved in pre-rRNA processing and ribosome assembly. Is associated with intranucleolar chromatin and pre-ribosomal particles and plays a role in controlling activation and repression of a specific subset of rRNA genes located in distinctive nucleolar organizer regions. Binds specifically rDNA chromatin and may be required to maintain rDNA chromatin structure, but is probably not required for the overall histone methylation status of 45S rRNA genes. Involved in leaf polarity establishment by functioning cooperatively with AS1 to repress abaxial genes ARF3, ARF4, KAN1, KAN2, YAB1 and YAB5, and the knox homeobox genes KNAT1, KNAT2, KNAT6, and STM to promote adaxial development in leaf primordia at shoot apical meristems at high temperatures. The chain is Nucleolin 1 from Arabidopsis thaliana (Mouse-ear cress).